Consider the following 635-residue polypeptide: DNA mismatch repair protein MutL (635 aa).

Residues 359–399 (GTNKYAQPEAAKSSAAEQAVARERSSARERAAPAYKEDHPY) form a disordered region. The segment covering 364–377 (AQPEAAKSSAAEQA) has biased composition (low complexity). Positions 378-399 (VARERSSARERAAPAYKEDHPY) are enriched in basic and acidic residues.

The protein belongs to the DNA mismatch repair MutL/HexB family.

Its function is as follows. This protein is involved in the repair of mismatches in DNA. It is required for dam-dependent methyl-directed DNA mismatch repair. May act as a 'molecular matchmaker', a protein that promotes the formation of a stable complex between two or more DNA-binding proteins in an ATP-dependent manner without itself being part of a final effector complex. This is DNA mismatch repair protein MutL from Yersinia pseudotuberculosis serotype O:1b (strain IP 31758).